Consider the following 499-residue polypeptide: Apolipoprotein N-acyltransferase (499 aa).

6 helical membrane-spanning segments follow: residues 9–29, 50–70, 77–97, 114–134, 148–168, and 183–203; these read LLLG…PALL, LGYI…SIGV, FWWA…FFVS, FIFC…FTGL, ILIQ…VIYI, and LKVL…YGSV. Residues 220-464 enclose the CN hydrolase domain; the sequence is VQPSIPQTEK…DGLIPKKLDS (245 aa). Glutamate 259 acts as the Proton acceptor in catalysis. The active site involves lysine 322. The active-site Nucleophile is the cysteine 372. The helical transmembrane segment at 466 to 486 threads the bilayer; it reads TIFSKFGNITILLIVFFIFLV.

It belongs to the CN hydrolase family. Apolipoprotein N-acyltransferase subfamily.

It is found in the cell inner membrane. It catalyses the reaction N-terminal S-1,2-diacyl-sn-glyceryl-L-cysteinyl-[lipoprotein] + a glycerophospholipid = N-acyl-S-1,2-diacyl-sn-glyceryl-L-cysteinyl-[lipoprotein] + a 2-acyl-sn-glycero-3-phospholipid + H(+). It functions in the pathway protein modification; lipoprotein biosynthesis (N-acyl transfer). Its function is as follows. Catalyzes the phospholipid dependent N-acylation of the N-terminal cysteine of apolipoprotein, the last step in lipoprotein maturation. The polypeptide is Apolipoprotein N-acyltransferase (Rickettsia bellii (strain RML369-C)).